The primary structure comprises 1957 residues: Sporulation-specific protein 15 (1957 aa).

Low complexity-rich tracts occupy residues Met-1–Ser-12 and Ala-19–Ser-28. Residues Met-1–Thr-102 are disordered. Residues Ser-58 to Ile-83 show a composition bias toward basic and acidic residues. A compositionally biased stretch (polar residues) spans Ser-90–Thr-102. Position 105 is a phosphoserine (Ser-105). Coiled coils occupy residues Lys-199 to Leu-785, Val-804 to Asp-1235, Lys-1320 to Asp-1471, and Glu-1481 to Glu-1723.

The protein belongs to the MPC70 family. Monomer.

The protein localises to the cytoplasm. It localises to the cytoskeleton. It is found in the microtubule organizing center. The protein resides in the spindle pole body. Functionally, has a role in the initiation of spore membrane formation. This Schizosaccharomyces pombe (strain 972 / ATCC 24843) (Fission yeast) protein is Sporulation-specific protein 15 (spo15).